We begin with the raw amino-acid sequence, 532 residues long: O-phosphoserine--tRNA(Cys) ligase (532 aa).

Substrate contacts are provided by residues H186–T188, S231–S233, Y273–Y274, and N317.

Belongs to the class-II aminoacyl-tRNA synthetase family. O-phosphoseryl-tRNA(Cys) synthetase subfamily. In terms of assembly, homotetramer. Interacts with SepCysS.

The enzyme catalyses tRNA(Cys) + O-phospho-L-serine + ATP = O-phospho-L-seryl-tRNA(Cys) + AMP + diphosphate. In terms of biological role, catalyzes the attachment of O-phosphoserine (Sep) to tRNA(Cys). This Methanothermobacter thermautotrophicus (strain ATCC 29096 / DSM 1053 / JCM 10044 / NBRC 100330 / Delta H) (Methanobacterium thermoautotrophicum) protein is O-phosphoserine--tRNA(Cys) ligase.